The primary structure comprises 215 residues: Small ribosomal subunit protein eS1 (215 aa).

This sequence belongs to the eukaryotic ribosomal protein eS1 family.

This Halorubrum lacusprofundi (strain ATCC 49239 / DSM 5036 / JCM 8891 / ACAM 34) protein is Small ribosomal subunit protein eS1.